A 307-amino-acid polypeptide reads, in one-letter code: Ethylmalonyl-CoA decarboxylase (307 aa).

An N-acetylalanine modification is found at Ala-2. At Lys-217 the chain carries N6-acetyllysine; alternate. Lys-217 is subject to N6-succinyllysine; alternate. N6-succinyllysine is present on Lys-301.

The protein belongs to the enoyl-CoA hydratase/isomerase family.

It is found in the cytoplasm. It localises to the cytosol. It catalyses the reaction (2S)-ethylmalonyl-CoA + H(+) = butanoyl-CoA + CO2. It carries out the reaction (S)-methylmalonyl-CoA + H(+) = propanoyl-CoA + CO2. The catalysed reaction is (2R)-ethylmalonyl-CoA + H(+) = butanoyl-CoA + CO2. Decarboxylates ethylmalonyl-CoA, a potentially toxic metabolite, to form butyryl-CoA, suggesting it might be involved in metabolite proofreading. Acts preferentially on (S)-ethylmalonyl-CoA but also has some activity on the (R)-isomer. Also has methylmalonyl-CoA decarboxylase activity at lower level. This Homo sapiens (Human) protein is Ethylmalonyl-CoA decarboxylase (ECHDC1).